The primary structure comprises 248 residues: Methionine aminopeptidase (248 aa).

Histidine 77 contributes to the substrate binding site. Positions 94, 105, and 169 each coordinate a divalent metal cation. Histidine 176 provides a ligand contact to substrate. Positions 202 and 233 each coordinate a divalent metal cation.

Belongs to the peptidase M24A family. Methionine aminopeptidase type 1 subfamily. In terms of assembly, monomer. It depends on Co(2+) as a cofactor. Zn(2+) is required as a cofactor. Requires Mn(2+) as cofactor. Fe(2+) serves as cofactor.

It catalyses the reaction Release of N-terminal amino acids, preferentially methionine, from peptides and arylamides.. Removes the N-terminal methionine from nascent proteins. The N-terminal methionine is often cleaved when the second residue in the primary sequence is small and uncharged (Met-Ala-, Cys, Gly, Pro, Ser, Thr, or Val). Requires deformylation of the N(alpha)-formylated initiator methionine before it can be hydrolyzed. This Mycoplasma genitalium (strain ATCC 33530 / DSM 19775 / NCTC 10195 / G37) (Mycoplasmoides genitalium) protein is Methionine aminopeptidase.